Consider the following 756-residue polypeptide: uncharacterized protein (756 aa).

This is an uncharacterized protein from Mycoplasma genitalium (strain ATCC 33530 / DSM 19775 / NCTC 10195 / G37) (Mycoplasmoides genitalium).